The sequence spans 158 residues: Cyclic pyranopterin monophosphate synthase (158 aa).

Substrate is bound by residues 76–78 (LCH) and 114–115 (ME). Asp-129 is a catalytic residue.

The protein belongs to the MoaC family. Homohexamer; trimer of dimers.

The catalysed reaction is (8S)-3',8-cyclo-7,8-dihydroguanosine 5'-triphosphate = cyclic pyranopterin phosphate + diphosphate. It functions in the pathway cofactor biosynthesis; molybdopterin biosynthesis. Its function is as follows. Catalyzes the conversion of (8S)-3',8-cyclo-7,8-dihydroguanosine 5'-triphosphate to cyclic pyranopterin monophosphate (cPMP). This chain is Cyclic pyranopterin monophosphate synthase, found in Shewanella piezotolerans (strain WP3 / JCM 13877).